A 105-amino-acid chain; its full sequence is MVEFCPKCNNIMLPKNGRLKCTVCGFEEELGNRTEEYELKEKIEAKKQEVTVIEDVDTLPTTRIECPSCGNMEASWWLQQTRCADEPETRFYKCKKCGHTWREYD.

Zn(2+) is bound by residues Cys-5, Cys-8, Cys-21, Cys-24, Cys-66, Cys-69, Cys-94, and Cys-97. The segment at Cys-5–Cys-24 adopts a C4-type zinc-finger fold. Residues Thr-62–Arg-102 form a TFIIS-type zinc finger.

The protein belongs to the archaeal RpoM/eukaryotic RPA12/RPB9/RPC11 RNA polymerase family.

Functionally, induces RNA cleavage activity in the RNA polymerase. In its presence, the cleavage activity of the RNA polymerase truncates the RNA back to position +15 in a stepwise manner by releasing mainly dinucleotides from the 3'-end of the nascent RNA. The truncated RNAs are able to continue elongation. Involved in transcriptional proofreading and fidelity. Misincorporation of nucleotides during elongation of transcription leads to arrested elongation complexes which are rescued by TFS-promoted removal of a dinucleotide from the 3'-end. TFS is able to induce a cleavage resynthesis cycle in stalled elongation complexes (resulting from the next missing nucleotide or a reduced incorporation rate of a wrong nucleotide) preventing misincorporation and enabling proofreading in a post-incorporation manner. Pausing of elongation complexes is the main determinant of TFS-induced RNA cleavage. The polypeptide is Transcription factor S (Methanothermococcus thermolithotrophicus (Methanococcus thermolithotrophicus)).